Consider the following 387-residue polypeptide: MKQAVIVDCIRTPMGRSKAGVFRNMRAESLSAELMKALLVRNPQLDPNTIEDVIWGCVQQTLEQGFNIARNAALLAGIPKQAGAVTVNRLCGSSMEAIHQAARAIMTGMGDTFIVGGVEHMGHVPMNHGVDFHPGLATNVAKASGMMGLTAEMLGKMHGITRQQQDEFAVRSHQRAHAATVEGRFANEIHAIEGHDANGALIKVMHDEVIRPETSLESLATLRPVFDPANGTVTAGTSSALSDGASAMLVMEEEKAKALGLPIRARIRSMAVAGCDAAIMGYGPVPATQKALQRAGLTMNDIDLIELNEAFAAQSLPCVKDLGLMDLVDEKVNLNGGAIALGHPLGCSGARISTTLINLMESKDATLGLATMCIGLGQGIATVFERA.

Cys-91 serves as the catalytic Acyl-thioester intermediate. Residues His-343 and Cys-373 each act as proton acceptor in the active site.

It belongs to the thiolase-like superfamily. Thiolase family. Heterotetramer of two alpha chains (FadB) and two beta chains (FadA).

The protein resides in the cytoplasm. The catalysed reaction is an acyl-CoA + acetyl-CoA = a 3-oxoacyl-CoA + CoA. The protein operates within lipid metabolism; fatty acid beta-oxidation. Catalyzes the final step of fatty acid oxidation in which acetyl-CoA is released and the CoA ester of a fatty acid two carbons shorter is formed. The chain is 3-ketoacyl-CoA thiolase from Shewanella loihica (strain ATCC BAA-1088 / PV-4).